The chain runs to 252 residues: 2-succinyl-6-hydroxy-2,4-cyclohexadiene-1-carboxylate synthase (252 aa).

It belongs to the AB hydrolase superfamily. MenH family. Monomer.

The enzyme catalyses 5-enolpyruvoyl-6-hydroxy-2-succinyl-cyclohex-3-ene-1-carboxylate = (1R,6R)-6-hydroxy-2-succinyl-cyclohexa-2,4-diene-1-carboxylate + pyruvate. It participates in quinol/quinone metabolism; 1,4-dihydroxy-2-naphthoate biosynthesis; 1,4-dihydroxy-2-naphthoate from chorismate: step 3/7. Its pathway is quinol/quinone metabolism; menaquinone biosynthesis. Functionally, catalyzes a proton abstraction reaction that results in 2,5-elimination of pyruvate from 2-succinyl-5-enolpyruvyl-6-hydroxy-3-cyclohexene-1-carboxylate (SEPHCHC) and the formation of 2-succinyl-6-hydroxy-2,4-cyclohexadiene-1-carboxylate (SHCHC). The polypeptide is 2-succinyl-6-hydroxy-2,4-cyclohexadiene-1-carboxylate synthase (Salmonella schwarzengrund (strain CVM19633)).